The sequence spans 330 residues: MKTAYIAKQRQISFVKSHFSRQLEERLGLIEVQAPILSRVGDGTQDNLSGCEKAVQVKVKALPDAQFEVVHSLAKWKRQTLGQHDFSAGEGLYTHMKALRPDEDRLSPLHSVYVDQWDWERVMGDGERQFSTLKSTVEAIWAGIKATEAAVSEEFGLAPFLPDQIHFVHSQELLSRYPDLDAKGRERAIAKDLGAVFLVGIGGKLSDGHRHDVRAPDYDDWSTPSELGHAGLNGDILVWNPVLEDAFELSSMGIRVDADTLKHQLALTGDEDRLQLEWHQALLRGEMPQTIGGGIGQSRLTMLLLQLPHIGQVQCGVWPAAVRESVPSLL.

Belongs to the class-II aminoacyl-tRNA synthetase family. AsnA subfamily.

The protein localises to the cytoplasm. It carries out the reaction L-aspartate + NH4(+) + ATP = L-asparagine + AMP + diphosphate + H(+). It participates in amino-acid biosynthesis; L-asparagine biosynthesis; L-asparagine from L-aspartate (ammonia route): step 1/1. The chain is Aspartate--ammonia ligase from Shigella dysenteriae serotype 1 (strain Sd197).